Reading from the N-terminus, the 570-residue chain is A-type ATP synthase subunit A (570 aa).

223 to 230 is a binding site for ATP; it reads GPFGSGKT.

It belongs to the ATPase alpha/beta chains family. As to quaternary structure, has multiple subunits with at least A(3), B(3), C, D, E, F, H, I and proteolipid K(x).

Its subcellular location is the cell membrane. It carries out the reaction ATP + H2O + 4 H(+)(in) = ADP + phosphate + 5 H(+)(out). Component of the A-type ATP synthase that produces ATP from ADP in the presence of a proton gradient across the membrane. The A chain is the catalytic subunit. This Nanoarchaeum equitans (strain Kin4-M) protein is A-type ATP synthase subunit A.